Reading from the N-terminus, the 492-residue chain is Regulatory protein ViaA (492 aa).

This sequence belongs to the ViaA family. As to quaternary structure, homodimer. Interacts with RavA.

The protein resides in the cytoplasm. Component of the RavA-ViaA chaperone complex, which may act on the membrane to optimize the function of some of the respiratory chains. ViaA stimulates the ATPase activity of RavA. This Pectobacterium atrosepticum (strain SCRI 1043 / ATCC BAA-672) (Erwinia carotovora subsp. atroseptica) protein is Regulatory protein ViaA.